The sequence spans 248 residues: tRNA uridine(34) hydroxylase (248 aa).

Residues 127 to 221 (RGRPLVLLDT…YFEEVGGEGY (95 aa)) form the Rhodanese domain. Cys-181 functions as the Cysteine persulfide intermediate in the catalytic mechanism.

Belongs to the TrhO family.

It carries out the reaction uridine(34) in tRNA + AH2 + O2 = 5-hydroxyuridine(34) in tRNA + A + H2O. Its function is as follows. Catalyzes oxygen-dependent 5-hydroxyuridine (ho5U) modification at position 34 in tRNAs. This chain is tRNA uridine(34) hydroxylase, found in Xanthomonas axonopodis pv. citri (strain 306).